A 272-amino-acid polypeptide reads, in one-letter code: Universal stress protein MT2699 (272 aa).

ATP-binding positions include Gly15, 109 to 115 (GSVGIGR), and 123 to 124 (ST).

Belongs to the universal stress protein A family.

This Mycobacterium tuberculosis (strain CDC 1551 / Oshkosh) protein is Universal stress protein MT2699.